A 325-amino-acid chain; its full sequence is MVTEHIFDFEWRPLQNYLRDRDIAIPPFAAEQESRSDALYNWIVSKGYSGKEGLNLGTYYHISDYGVIGLALLCAENVGDILKVIRAYVKLFNRDIANVGVKPRENYEVEIHISVNFKPEWNDASRQFHVNVIASATYKLIMDLLGNDFPISALTVPVHGADKTIYEGFFSLPVKHEGNDIIFSFPAHQLNRTLATANPAVFQSALTMAGESFNALLEVEMGGLRQRIELFLDSIPDQYPSLVTTAKYLRMNERTVRRRLADEGCTYRQIVDKARKERAIALLLNSSIPVDRISDILGYSETASFRHAFRRWTGQSTTEFRNSFH.

Positions 226 to 323 (QRIELFLDSI…GQSTTEFRNS (98 aa)) constitute an HTH araC/xylS-type domain. DNA-binding regions (H-T-H motif) lie at residues 243 to 264 (VTTAKYLRMNERTVRRRLADEG) and 290 to 313 (VDRISDILGYSETASFRHAFRRWT).

Transcriptional regulator involved in both the repression (at least 99 genes, such as mexR and algU) and in the activation (at least 203 genes, such as mvfR, rsaL, vqsR and rpoS) of regulatory or putative regulatory proteins which are implicated in quorum sensing, virulence and multidrug resistance. This is HTH-type transcriptional regulator VqsM (vqsM) from Pseudomonas aeruginosa (strain ATCC 15692 / DSM 22644 / CIP 104116 / JCM 14847 / LMG 12228 / 1C / PRS 101 / PAO1).